A 483-amino-acid polypeptide reads, in one-letter code: MESLSKESYLSSFHQFPSYAPLPDHIKFESVSSKKIQCSALENISPHQYDILQAPNSRALISALKTLQEKICRLELEKTHARDRLTNLTRVAGEHKKVLESEKQSAELAAKEATNQQNDIGKQLNNAKQRCSLLEKQLDYMKEMMENADTQKTTIHEHQMLTQKEQKEIQSKLKKLEVLEKMCTRLSATHKSAETKIQHLEEKLSVEEQNRKALQDKAAQVQTSLEVNRILLSSASAQNSTQRKVKKKKQSKLKNSVSKEPPSKCFYPKAGELPFVAGKSTTSSHSLSANVQNVLHMMKHHSPQVSQKNPKTAEHKPSVLPGGSRTIPTRLISSFTGDNLSDILLALQDELGQMSFEHQELLRHINETKNTDMREDLERELDYVVKQMEIKSDQIMKLKRHQLNVNKLKKTAKLLKEQPRPTSVTKLAADKQNTGAKDPSTPRRKGDLADGSGTPNSKASLELLKSVRKIQMTLKKDDIMWEK.

The stretch at 94 to 228 forms a coiled coil; it reads EHKKVLESEK…AQVQTSLEVN (135 aa). Disordered stretches follow at residues 237 to 261, 303 to 325, and 416 to 460; these read AQNS…SKEP, PQVS…GGSR, and KEQP…SKAS. The segment covering 243-252 has biased composition (basic residues); sequence RKVKKKKQSK. The stretch at 375–418 forms a coiled coil; that stretch reads EDLERELDYVVKQMEIKSDQIMKLKRHQLNVNKLKKTAKLLKEQ. A compositionally biased stretch (polar residues) spans 420–435; that stretch reads RPTSVTKLAADKQNTG.

This sequence belongs to the translokin family. In terms of assembly, interacts with clip1, mis12, ndc80 and zwint. Interacts with gamma-tubulin.

It localises to the cytoplasm. Its subcellular location is the cytoskeleton. It is found in the microtubule organizing center. The protein localises to the centrosome. The protein resides in the chromosome. It localises to the centromere. Its subcellular location is the kinetochore. It is found in the spindle. Functionally, required for spindle microtubule attachment to both kinetochores and centrosomes. Also functions to tether minus-ends of spindle microtubules to centrosomes. May act by forming ring-like structures around microtubules, or by serving as a cross-linker or scaffold at the attachment site. In Xenopus tropicalis (Western clawed frog), this protein is Centrosomal protein cep57l1 (cep57l1).